A 90-amino-acid chain; its full sequence is UPF0335 protein R02793 (90 aa).

It belongs to the UPF0335 family.

This is UPF0335 protein R02793 from Rhizobium meliloti (strain 1021) (Ensifer meliloti).